Reading from the N-terminus, the 65-residue chain is Large ribosomal subunit protein bL35 (65 aa).

It belongs to the bacterial ribosomal protein bL35 family.

In Erwinia tasmaniensis (strain DSM 17950 / CFBP 7177 / CIP 109463 / NCPPB 4357 / Et1/99), this protein is Large ribosomal subunit protein bL35.